Reading from the N-terminus, the 464-residue chain is Asparagine--tRNA ligase (464 aa).

The protein belongs to the class-II aminoacyl-tRNA synthetase family. As to quaternary structure, homodimer.

Its subcellular location is the cytoplasm. The catalysed reaction is tRNA(Asn) + L-asparagine + ATP = L-asparaginyl-tRNA(Asn) + AMP + diphosphate + H(+). The polypeptide is Asparagine--tRNA ligase (Xanthomonas euvesicatoria pv. vesicatoria (strain 85-10) (Xanthomonas campestris pv. vesicatoria)).